We begin with the raw amino-acid sequence, 576 residues long: DNA mismatch repair protein MutL (576 aa).

Belongs to the DNA mismatch repair MutL/HexB family.

Its function is as follows. This protein is involved in the repair of mismatches in DNA. It is required for dam-dependent methyl-directed DNA mismatch repair. May act as a 'molecular matchmaker', a protein that promotes the formation of a stable complex between two or more DNA-binding proteins in an ATP-dependent manner without itself being part of a final effector complex. The sequence is that of DNA mismatch repair protein MutL from Chlamydia trachomatis serovar L2 (strain ATCC VR-902B / DSM 19102 / 434/Bu).